The following is a 444-amino-acid chain: MTEQPPQNHSVDLNQNEDNNENDYRSSSATDAERPCEPKIEESTAKPPTGPPAPPPPPNGGLVAWLHVIGGFMLFFNTWGIMNAFGVFQTYYESGALFERSSSDISWIGSIQATMLLLVGFFTGSIYDRGYLRALLVVGSFCIVFGHMMLSLCKTYGQVLLAQGFCVGIGAGCLFVPCVSVLPTYFSSRLGTALGLAVSGSSMGGVIYPIVLNELIGPLGFGWSVRVIGFIALGTLLVPIAVMKQRVKPPRARALIDWSAFSDIPYMAFTLASLLAFMGLFALLFYISYFGAAKPITDTRMAFYIVPILNAASCFGRTIPNAMADKIGPFNLIAPCCLAVGVLILCLLAVTTEAGLIVIALLSGFFGGALIGLPPLCFVALTKDKTKIGTRIGMGFGMVGLGVLAGGPAGGAILSHSHHSNWTGLWVYGGVTSLVAGFIICIAV.

The span at methionine 1 to leucine 13 shows a compositional bias: polar residues. The tract at residues methionine 1–proline 57 is disordered. N-linked (GlcNAc...) asparagine glycosylation occurs at asparagine 8. Residues aspartate 31 to threonine 44 show a composition bias toward basic and acidic residues. The segment covering proline 48–proline 57 has biased composition (pro residues). Helical transmembrane passes span leucine 62–methionine 82, tryptophan 107–tyrosine 127, alanine 134–lysine 154, valine 159–valine 179, threonine 192–leucine 212, tryptophan 223–methionine 243, methionine 267–isoleucine 287, methionine 301–methionine 323, phenylalanine 330–valine 350, leucine 356–leucine 376, and methionine 394–leucine 414. An N-linked (GlcNAc...) asparagine glycan is attached at asparagine 421. A helical membrane pass occupies residues glycine 424–valine 444.

It belongs to the major facilitator superfamily. Monocarboxylate porter (TC 2.A.1.13) family.

The protein localises to the cell membrane. Its function is as follows. MFS-type transporter; part of the gene cluster that mediates the biosynthesis of the antibiotic 2,4- dihydroxy-3-methyl-6-(2-oxopropyl)benzaldehyde (DHMBA) and its derivatives. Is probably involved in the transport of the metabolites to the environment. This Emericella nidulans (strain FGSC A4 / ATCC 38163 / CBS 112.46 / NRRL 194 / M139) (Aspergillus nidulans) protein is MFS-type transporter dbaD.